A 284-amino-acid polypeptide reads, in one-letter code: Lipoyl synthase (284 aa).

Residues Cys-36, Cys-41, Cys-47, Cys-62, Cys-66, Cys-69, and Ser-273 each contribute to the [4Fe-4S] cluster site. Positions 48–262 (WGKGTATFMI…RTIGLKKGFR (215 aa)) constitute a Radical SAM core domain.

The protein belongs to the radical SAM superfamily. Lipoyl synthase family. Requires [4Fe-4S] cluster as cofactor.

The protein localises to the cytoplasm. The catalysed reaction is [[Fe-S] cluster scaffold protein carrying a second [4Fe-4S](2+) cluster] + N(6)-octanoyl-L-lysyl-[protein] + 2 oxidized [2Fe-2S]-[ferredoxin] + 2 S-adenosyl-L-methionine + 4 H(+) = [[Fe-S] cluster scaffold protein] + N(6)-[(R)-dihydrolipoyl]-L-lysyl-[protein] + 4 Fe(3+) + 2 hydrogen sulfide + 2 5'-deoxyadenosine + 2 L-methionine + 2 reduced [2Fe-2S]-[ferredoxin]. Its pathway is protein modification; protein lipoylation via endogenous pathway; protein N(6)-(lipoyl)lysine from octanoyl-[acyl-carrier-protein]: step 2/2. Catalyzes the radical-mediated insertion of two sulfur atoms into the C-6 and C-8 positions of the octanoyl moiety bound to the lipoyl domains of lipoate-dependent enzymes, thereby converting the octanoylated domains into lipoylated derivatives. This is Lipoyl synthase from Phocaeicola vulgatus (strain ATCC 8482 / DSM 1447 / JCM 5826 / CCUG 4940 / NBRC 14291 / NCTC 11154) (Bacteroides vulgatus).